Consider the following 425-residue polypeptide: Phosphomethylpyrimidine synthase (425 aa).

Substrate is bound by residues methionine 94, tyrosine 123, histidine 162, 184-186 (SRG), 225-228 (NGMR), and glutamate 264. Histidine 268 contacts Zn(2+). Position 291 (tyrosine 291) interacts with substrate. Position 332 (histidine 332) interacts with Zn(2+). Residues cysteine 407, cysteine 410, and cysteine 414 each contribute to the [4Fe-4S] cluster site.

This sequence belongs to the ThiC family. [4Fe-4S] cluster serves as cofactor.

The enzyme catalyses 5-amino-1-(5-phospho-beta-D-ribosyl)imidazole + S-adenosyl-L-methionine = 4-amino-2-methyl-5-(phosphooxymethyl)pyrimidine + CO + 5'-deoxyadenosine + formate + L-methionine + 3 H(+). Its pathway is cofactor biosynthesis; thiamine diphosphate biosynthesis. Catalyzes the synthesis of the hydroxymethylpyrimidine phosphate (HMP-P) moiety of thiamine from aminoimidazole ribotide (AIR) in a radical S-adenosyl-L-methionine (SAM)-dependent reaction. The protein is Phosphomethylpyrimidine synthase of Methanocorpusculum labreanum (strain ATCC 43576 / DSM 4855 / Z).